A 318-amino-acid chain; its full sequence is NADH-ubiquinone oxidoreductase chain 1 (318 aa).

8 consecutive transmembrane segments (helical) span residues phenylalanine 2–leucine 22, threonine 76–isoleucine 96, leucine 102–alanine 122, leucine 146–isoleucine 166, tyrosine 171–alanine 191, alanine 217–leucine 237, glutamate 253–valine 273, and leucine 294–isoleucine 314.

The protein belongs to the complex I subunit 1 family. As to quaternary structure, core subunit of respiratory chain NADH dehydrogenase (Complex I) which is composed of 45 different subunits.

The protein resides in the mitochondrion inner membrane. It carries out the reaction a ubiquinone + NADH + 5 H(+)(in) = a ubiquinol + NAD(+) + 4 H(+)(out). Its function is as follows. Core subunit of the mitochondrial membrane respiratory chain NADH dehydrogenase (Complex I) which catalyzes electron transfer from NADH through the respiratory chain, using ubiquinone as an electron acceptor. Essential for the catalytic activity and assembly of complex I. In Lemur catta (Ring-tailed lemur), this protein is NADH-ubiquinone oxidoreductase chain 1 (MT-ND1).